The primary structure comprises 421 residues: Homoserine dehydrogenase (421 aa).

NAD(+)-binding residues include Val-15, Ala-34, and Val-44. Residue Val-15 coordinates NADP(+). Val-15 contacts NADPH. 2 residues coordinate NADP(+): Arg-46 and Lys-103. 2 residues coordinate NADPH: Arg-46 and Lys-103. Residues Glu-125, Val-128, Gly-130, and Ile-132 each coordinate Na(+). NADP(+)-binding residues include Gly-183 and Glu-186. The L-homoserine site is built by Glu-186 and Asp-197. Lys-201 (proton donor) is an active-site residue. Residue Gly-298 participates in NAD(+) binding. Gly-298 is a binding site for NADP(+). Gly-298 contributes to the NADPH binding site. Positions 343 to 418 (YARLLVSDEK…SVLDTPKMIR (76 aa)) constitute an ACT domain.

The protein belongs to the homoserine dehydrogenase family. It depends on a metal cation as a cofactor.

It carries out the reaction L-homoserine + NADP(+) = L-aspartate 4-semialdehyde + NADPH + H(+). The catalysed reaction is L-homoserine + NAD(+) = L-aspartate 4-semialdehyde + NADH + H(+). It functions in the pathway amino-acid biosynthesis; L-methionine biosynthesis via de novo pathway; L-homoserine from L-aspartate: step 3/3. Its pathway is amino-acid biosynthesis; L-threonine biosynthesis; L-threonine from L-aspartate: step 3/5. Catalyzes the conversion of L-aspartate-beta-semialdehyde (L-Asa) to L-homoserine (L-Hse), the third step in the biosynthesis of threonine and methionine from aspartate. This is Homoserine dehydrogenase (hom) from Helicobacter pylori (strain ATCC 700392 / 26695) (Campylobacter pylori).